We begin with the raw amino-acid sequence, 134 residues long: Cytochrome b5 (134 aa).

The residue at position 2 (Ala2) is an N-acetylalanine. 3 positions are modified to N6-acetyllysine: Lys7, Lys10, and Lys19. Residues 9-85 enclose the Cytochrome b5 heme-binding domain; it reads VKYYTLEEIQ…SKTFIIGELH (77 aa). The heme site is built by His44 and His68. The helical transmembrane segment at 109-131 threads the bilayer; sequence WWTNWVIPAISALVVSLMYHFYT.

Belongs to the cytochrome b5 family.

The protein localises to the endoplasmic reticulum membrane. It localises to the microsome membrane. Its subcellular location is the cytoplasm. Its function is as follows. Cytochrome b5 is a membrane-bound hemoprotein functioning as an electron carrier for several membrane-bound oxygenases. This is Cytochrome b5 (CYB5A) from Sus scrofa (Pig).